The sequence spans 300 residues: Pantothenate synthetase (300 aa).

30-37 contributes to the ATP binding site; it reads MGYLHEGH. The Proton donor role is filled by H37. Q61 contributes to the (R)-pantoate binding site. Q61 lines the beta-alanine pocket. 147-150 contacts ATP; it reads GMKD. Q153 is a (R)-pantoate binding site. ATP is bound by residues V176 and 184 to 187; that span reads KSSR.

This sequence belongs to the pantothenate synthetase family. In terms of assembly, homodimer.

It is found in the cytoplasm. It catalyses the reaction (R)-pantoate + beta-alanine + ATP = (R)-pantothenate + AMP + diphosphate + H(+). It functions in the pathway cofactor biosynthesis; (R)-pantothenate biosynthesis; (R)-pantothenate from (R)-pantoate and beta-alanine: step 1/1. In terms of biological role, catalyzes the condensation of pantoate with beta-alanine in an ATP-dependent reaction via a pantoyl-adenylate intermediate. This Geobacillus kaustophilus (strain HTA426) protein is Pantothenate synthetase.